The sequence spans 170 residues: Probable calcium-binding protein CML27 (170 aa).

Residue Ala2 is modified to N-acetylalanine. EF-hand domains are found at residues 19–54 (ANPE…MGTS), 55–85 (YTET…TLCR), 88–123 (SSAA…LGMS), and 136–159 (VDAD…SSLL). Ca(2+) is bound by residues Asp32, Asn34, Asp36, Lys38, Glu43, Asp68, Asp70, Asp72, Tyr74, Glu79, Asp101, Asp103, Asn105, Glu112, Asp137, Asp139, Asp141, Asn143, and Glu148.

Functionally, potential calcium sensor. This is Probable calcium-binding protein CML27 (CML27) from Arabidopsis thaliana (Mouse-ear cress).